Here is a 249-residue protein sequence, read N- to C-terminus: ATP synthase subunit a (249 aa).

The next 6 membrane-spanning stretches (helical) occupy residues 30–50, 84–104, 114–134, 143–163, 196–216, and 221–241; these read SAYM…GVAG, FFPL…VGII, LIVT…YGFY, IFVP…IEVF, LLAG…GMVI, and LELL…CIYL.

The protein belongs to the ATPase A chain family. In terms of assembly, F-type ATPases have 2 components, CF(1) - the catalytic core - and CF(0) - the membrane proton channel. CF(1) has five subunits: alpha(3), beta(3), gamma(1), delta(1), epsilon(1). CF(0) has four main subunits: a, b, b' and c.

It is found in the cell inner membrane. In terms of biological role, key component of the proton channel; it plays a direct role in the translocation of protons across the membrane. This is ATP synthase subunit a from Rhodopseudomonas palustris (strain BisB18).